A 1078-amino-acid polypeptide reads, in one-letter code: Phosphatidylinositol-3,5-bisphosphate 3-phosphatase MTMR4 (1078 aa).

Residues 154-571 (DHVKSRFQIE…RALQLWTAVY (418 aa)) enclose the Myotubularin phosphatase domain. The disordered stretch occupies residues 267–290 (RMPNGNPSNKGNNDGSDNSDTDFD). A compositionally biased stretch (low complexity) spans 270–282 (NGNPSNKGNNDGS). A 1,2-diacyl-sn-glycero-3-phospho-(1D-myo-inositol-3,5-bisphosphate) contacts are provided by N321, N346, and I347. 3 residues coordinate a 1,2-diacyl-sn-glycero-3-phospho-(1D-myo-inositol-3-phosphate): N321, N346, and I347. The active-site Phosphocysteine intermediate is C408. Residues S409, D410, G411, W412, D413, R414, K450, and R454 each coordinate a 1,2-diacyl-sn-glycero-3-phospho-(1D-myo-inositol-3,5-bisphosphate). The a 1,2-diacyl-sn-glycero-3-phospho-(1D-myo-inositol-3-phosphate) site is built by S409, D410, G411, W412, D413, and R414. R454 provides a ligand contact to a 1,2-diacyl-sn-glycero-3-phospho-(1D-myo-inositol-3-phosphate). Residues 629 to 648 (SSDPNLNNHQGNLESCSSSK) are compositionally biased toward polar residues. The segment at 629–694 (SSDPNLNNHQ…SGSATNQNNN (66 aa)) is disordered. The stretch at 904–935 (VQQRLRQMEASYKQEVDLLRRQVWELQLQLEI) forms a coiled coil. The interval 960–982 (DGSDMDDLYSDKSEDRLSEASWE) is disordered. Residues 968-982 (YSDKSEDRLSEASWE) are compositionally biased toward basic and acidic residues. Residues 997 to 1057 (DHMASHCFNC…VCNTCYDHIQ (61 aa)) form an FYVE-type zinc finger. Positions 1003, 1006, 1019, 1022, 1027, 1030, 1049, and 1052 each coordinate Zn(2+).

Belongs to the protein-tyrosine phosphatase family. Non-receptor class myotubularin subfamily. In terms of assembly, homooligomeric.

Its subcellular location is the early endosome membrane. The protein resides in the recycling endosome membrane. The protein localises to the late endosome membrane. It localises to the cytoplasmic vesicle. It is found in the phagosome membrane. The catalysed reaction is a 1,2-diacyl-sn-glycero-3-phospho-(1D-myo-inositol-3-phosphate) + H2O = a 1,2-diacyl-sn-glycero-3-phospho-(1D-myo-inositol) + phosphate. It carries out the reaction a 1,2-diacyl-sn-glycero-3-phospho-(1D-myo-inositol-3,5-bisphosphate) + H2O = a 1,2-diacyl-sn-glycero-3-phospho-(1D-myo-inositol-5-phosphate) + phosphate. The enzyme catalyses 1,2-dioctanoyl-sn-glycero-3-phospho-(1-D-myo-inositol-3-phosphate) + H2O = 1,2-dioctanoyl-sn-glycero-3-phospho-(1D-myo-inositol) + phosphate. It catalyses the reaction 1,2-dioctanoyl-sn-glycero-3-phospho-(1D-myo-inositol-3,5-bisphosphate) + H2O = 1,2-dioctanoyl-sn-glycero-3-phospho-(1D-myo-inositol-5-phosphate) + phosphate. Functionally, lipid phosphatase that specifically dephosphorylates the D-3 position of phosphatidylinositol 3-phosphate and phosphatidylinositol 3,5-bisphosphate, generating phosphatidylinositol and phosphatidylinositol 5-phosphate. Decreases the levels of phosphatidylinositol 3-phosphate, a phospholipid found in cell membranes where it acts as key regulator of both cell signaling and intracellular membrane traffic, in a subset of endosomal membranes to negatively regulate both endocytic recycling and trafficking and/or maturation of endosomes toward lysosomes. Through phosphatidylinositol 3-phosphate turnover in phagosome membranes regulates phagocytosis and phagosome maturation. By decreasing phosphatidylinositol 3-monophosphate (PI3P) levels in immune cells it can also regulate the innate immune response. Beside its lipid phosphatase activity, can also function as a molecular adapter to regulate midbody abscission during mitotic cytokinesis. Can also negatively regulate TGF-beta and BMP signaling through Smad proteins dephosphorylation and retention in endosomes. The protein is Phosphatidylinositol-3,5-bisphosphate 3-phosphatase MTMR4 (mtmr4) of Xenopus laevis (African clawed frog).